Here is a 159-residue protein sequence, read N- to C-terminus: Cyclic pyranopterin monophosphate synthase (159 aa).

Substrate-binding positions include 75-77 (LCH) and 113-114 (ME). Aspartate 128 is an active-site residue.

This sequence belongs to the MoaC family. In terms of assembly, homohexamer; trimer of dimers.

It catalyses the reaction (8S)-3',8-cyclo-7,8-dihydroguanosine 5'-triphosphate = cyclic pyranopterin phosphate + diphosphate. It participates in cofactor biosynthesis; molybdopterin biosynthesis. Functionally, catalyzes the conversion of (8S)-3',8-cyclo-7,8-dihydroguanosine 5'-triphosphate to cyclic pyranopterin monophosphate (cPMP). The polypeptide is Cyclic pyranopterin monophosphate synthase (Yersinia pseudotuberculosis serotype O:3 (strain YPIII)).